We begin with the raw amino-acid sequence, 400 residues long: Tryptophan synthase beta chain (400 aa).

Position 90 is an N6-(pyridoxal phosphate)lysine (lysine 90).

Belongs to the TrpB family. As to quaternary structure, tetramer of two alpha and two beta chains. It depends on pyridoxal 5'-phosphate as a cofactor.

It carries out the reaction (1S,2R)-1-C-(indol-3-yl)glycerol 3-phosphate + L-serine = D-glyceraldehyde 3-phosphate + L-tryptophan + H2O. It functions in the pathway amino-acid biosynthesis; L-tryptophan biosynthesis; L-tryptophan from chorismate: step 5/5. Functionally, the beta subunit is responsible for the synthesis of L-tryptophan from indole and L-serine. This is Tryptophan synthase beta chain (trpB) from Bacillus subtilis (strain 168).